A 336-amino-acid polypeptide reads, in one-letter code: Dihydroorotate dehydrogenase (quinone) (336 aa).

FMN contacts are provided by residues 62–66 (AGLDK) and threonine 86. Residue lysine 66 coordinates substrate. Position 111 to 115 (111 to 115 (NRMGF)) interacts with substrate. Positions 139 and 172 each coordinate FMN. Asparagine 172 is a binding site for substrate. The Nucleophile role is filled by serine 175. Asparagine 177 is a substrate binding site. FMN-binding residues include lysine 217 and threonine 245. 246–247 (NT) is a substrate binding site. Residues glycine 268, glycine 297, and 318–319 (YS) each bind FMN.

Belongs to the dihydroorotate dehydrogenase family. Type 2 subfamily. In terms of assembly, monomer. It depends on FMN as a cofactor.

The protein resides in the cell membrane. It carries out the reaction (S)-dihydroorotate + a quinone = orotate + a quinol. The protein operates within pyrimidine metabolism; UMP biosynthesis via de novo pathway; orotate from (S)-dihydroorotate (quinone route): step 1/1. In terms of biological role, catalyzes the conversion of dihydroorotate to orotate with quinone as electron acceptor. This Salmonella arizonae (strain ATCC BAA-731 / CDC346-86 / RSK2980) protein is Dihydroorotate dehydrogenase (quinone).